The following is a 216-amino-acid chain: DNA replication complex GINS protein PSF3 (216 aa).

The interval 1 to 16 is not essential for folding and stability of GINS complex, but may regulate accessibility to the central complex pore; it reads MSEAYFRVESGALGPE.

It belongs to the GINS3/PSF3 family. In terms of assembly, component of the GINS complex which is a heterotetramer of GINS1, GINS2, GINS3 and GINS4. Forms a stable subcomplex with GINS2. GINS complex interacts with DNA primase in vitro. Component of the CMG helicase complex, a hexameric ring of related MCM2-7 subunits stabilized by CDC45 and the tetrameric GINS complex.

It is found in the nucleus. It localises to the chromosome. Its function is as follows. Required for correct functioning of the GINS complex, a complex that plays an essential role in the initiation of DNA replication, and progression of DNA replication forks. GINS complex is a core component of CDC45-MCM-GINS (CMG) helicase, the molecular machine that unwinds template DNA during replication, and around which the replisome is built. This chain is DNA replication complex GINS protein PSF3 (GINS3), found in Pongo abelii (Sumatran orangutan).